Reading from the N-terminus, the 151-residue chain is Small ribosomal subunit protein uS15z (151 aa).

It belongs to the universal ribosomal protein uS15 family.

This Oryza sativa subsp. japonica (Rice) protein is Small ribosomal subunit protein uS15z.